Reading from the N-terminus, the 332-residue chain is Biotin synthase (332 aa).

The region spanning 53–282 (HFGKKVKLNM…TKEIRISGGR (230 aa)) is the Radical SAM core domain. The [4Fe-4S] cluster site is built by cysteine 71, cysteine 75, and cysteine 78. 4 residues coordinate [2Fe-2S] cluster: cysteine 115, cysteine 147, cysteine 207, and arginine 277.

It belongs to the radical SAM superfamily. Biotin synthase family. In terms of assembly, homodimer. [4Fe-4S] cluster is required as a cofactor. It depends on [2Fe-2S] cluster as a cofactor.

It catalyses the reaction (4R,5S)-dethiobiotin + (sulfur carrier)-SH + 2 reduced [2Fe-2S]-[ferredoxin] + 2 S-adenosyl-L-methionine = (sulfur carrier)-H + biotin + 2 5'-deoxyadenosine + 2 L-methionine + 2 oxidized [2Fe-2S]-[ferredoxin]. The protein operates within cofactor biosynthesis; biotin biosynthesis; biotin from 7,8-diaminononanoate: step 2/2. In terms of biological role, catalyzes the conversion of dethiobiotin (DTB) to biotin by the insertion of a sulfur atom into dethiobiotin via a radical-based mechanism. The protein is Biotin synthase of Bacillus cereus (strain G9842).